The chain runs to 188 residues: Single-stranded DNA-binding protein DdrB (188 aa).

Residues 140 to 188 form a disordered region; it reads YAVPGGAAGNGQGRPAPQGQPAQARPQATAARPAARPPVQPGQEEETPF. Low complexity predominate over residues 152–173; it reads GRPAPQGQPAQARPQATAARPA.

As to quaternary structure, homopentamer arranged in a ring-structure; DNA binds between subunits and along the top of the ring. The pentamers self-associate to coat ssDNA in higher-ordered structures; oligomerization facilitates the assembly of extended nucleoprotein complexes. Self-assembly does not however require ssDNA-binding. Interacts with SSB.

Functionally, ssDNA-binding protein that contributes to the ionizing radiation resistance of D.radiodurans. Plays a role in DNA repair and genome reconstitution in a RecA-independent process. Required for recovery from severe genomic fragmentation as a result of exposure to severe levels of ionizing radiation. Binds ssDNA but not dsDNA. Stimulates annealing of complementary ssDNA. Does not complement an ssb disruption. In Deinococcus radiodurans (strain ATCC 13939 / DSM 20539 / JCM 16871 / CCUG 27074 / LMG 4051 / NBRC 15346 / NCIMB 9279 / VKM B-1422 / R1), this protein is Single-stranded DNA-binding protein DdrB (ddrB).